A 403-amino-acid polypeptide reads, in one-letter code: Acetate kinase (403 aa).

Position 7 (Asn-7) interacts with Mg(2+). ATP is bound at residue Lys-14. Position 90 (Arg-90) interacts with substrate. Asp-147 serves as the catalytic Proton donor/acceptor. ATP is bound by residues 207–211, 283–285, and 331–335; these read HIGNG, DMR, and GVGEN. Position 386 (Glu-386) interacts with Mg(2+).

It belongs to the acetokinase family. As to quaternary structure, homodimer. Mg(2+) serves as cofactor. Mn(2+) is required as a cofactor.

The protein localises to the cytoplasm. It catalyses the reaction acetate + ATP = acetyl phosphate + ADP. It participates in metabolic intermediate biosynthesis; acetyl-CoA biosynthesis; acetyl-CoA from acetate: step 1/2. Catalyzes the formation of acetyl phosphate from acetate and ATP. Can also catalyze the reverse reaction. Phosphorylates propionate (54%) in addition to acetate (100%). Uses GTP (100%), ITP (163%), UTP (56%), and CTP (21%) as phosphoryl donors in addition to ATP (100%). This is Acetate kinase from Thermotoga maritima (strain ATCC 43589 / DSM 3109 / JCM 10099 / NBRC 100826 / MSB8).